The sequence spans 128 residues: DNA-directed RNA polymerase subunit omega (128 aa).

The disordered stretch occupies residues A87–F106.

It belongs to the RNA polymerase subunit omega family. In terms of assembly, the RNAP catalytic core consists of 2 alpha, 1 beta, 1 beta' and 1 omega subunit. When a sigma factor is associated with the core the holoenzyme is formed, which can initiate transcription.

It carries out the reaction RNA(n) + a ribonucleoside 5'-triphosphate = RNA(n+1) + diphosphate. In terms of biological role, promotes RNA polymerase assembly. Latches the N- and C-terminal regions of the beta' subunit thereby facilitating its interaction with the beta and alpha subunits. This is DNA-directed RNA polymerase subunit omega from Anaplasma marginale (strain St. Maries).